The primary structure comprises 1131 residues: Probable chloride channel protein UM03490-D (1131 aa).

12 consecutive transmembrane segments (helical) span residues Gly137–Thr157, Val206–Pro226, Phe305–Leu325, Ile341–Ile361, Gly380–Phe397, Ser414–Leu434, Phe485–Ile505, Tyr518–Gly538, Met577–Gly597, Gly603–Val623, Val643–Val663, and Ala680–Ser702. Disordered stretches follow at residues Asp815–Ala835 and Ala858–Gly928. Over residues Gly866 to Ser877 the composition is skewed to low complexity. The CBS domain occupies Ile944 to Glu1000. A compositionally biased stretch (low complexity) spans Arg1061–Arg1078. The interval Arg1061–Glu1131 is disordered. Positions Ser1104–Asn1113 are enriched in polar residues.

This sequence belongs to the chloride channel (TC 2.A.49) family.

It is found in the membrane. In terms of biological role, voltage-gated chloride channel. This Mycosarcoma maydis (Corn smut fungus) protein is Probable chloride channel protein UM03490-D.